A 225-amino-acid polypeptide reads, in one-letter code: Biosynthetic peptidoglycan transglycosylase (225 aa).

Residues 8-28 (VLLIFIGAILLIQLWIFSSLV) traverse the membrane as a helical segment.

The protein belongs to the glycosyltransferase 51 family.

The protein localises to the cell inner membrane. The catalysed reaction is [GlcNAc-(1-&gt;4)-Mur2Ac(oyl-L-Ala-gamma-D-Glu-L-Lys-D-Ala-D-Ala)](n)-di-trans,octa-cis-undecaprenyl diphosphate + beta-D-GlcNAc-(1-&gt;4)-Mur2Ac(oyl-L-Ala-gamma-D-Glu-L-Lys-D-Ala-D-Ala)-di-trans,octa-cis-undecaprenyl diphosphate = [GlcNAc-(1-&gt;4)-Mur2Ac(oyl-L-Ala-gamma-D-Glu-L-Lys-D-Ala-D-Ala)](n+1)-di-trans,octa-cis-undecaprenyl diphosphate + di-trans,octa-cis-undecaprenyl diphosphate + H(+). It functions in the pathway cell wall biogenesis; peptidoglycan biosynthesis. In terms of biological role, peptidoglycan polymerase that catalyzes glycan chain elongation from lipid-linked precursors. This chain is Biosynthetic peptidoglycan transglycosylase, found in Acinetobacter baumannii (strain AB307-0294).